Reading from the N-terminus, the 34-residue chain is Conotoxin Cl6d (34 aa).

3 cysteine pairs are disulfide-bonded: cysteine 4–cysteine 19, cysteine 12–cysteine 29, and cysteine 18–cysteine 33. A 4-hydroxyproline mark is found at proline 14 and proline 21.

Expressed by the venom duct.

The protein resides in the secreted. This is Conotoxin Cl6d from Californiconus californicus (California cone).